A 61-amino-acid polypeptide reads, in one-letter code: Large ribosomal subunit protein bL32 (61 aa).

Residues 1–10 are compositionally biased toward basic residues; sequence MAQPKKKTSN. Positions 1–23 are disordered; sequence MAQPKKKTSNAKRDQRRATWKRK.

The protein belongs to the bacterial ribosomal protein bL32 family.

This is Large ribosomal subunit protein bL32 from Gloeobacter violaceus (strain ATCC 29082 / PCC 7421).